We begin with the raw amino-acid sequence, 299 residues long: DNA-binding transcriptional repressor CapW (299 aa).

The segment at 1–22 is disordered; it reads MTDESKPTDDQPTSKGRQGARW. The segment at 1-95 is winged HTH domain; sequence MTDESKPTDD…SFKAVFPSSA (95 aa). The tract at residues 96–207 is WYL domain; sequence VERYLDDLLR…LTRIKCCKYV (112 aa). Residues 131 to 211 form the WYL domain; sequence GRRLNADIVG…KCCKYVGQDR (81 aa). Residues 156-200 are probable ligand-binding region; it reads YQSLTDPEGGERMLSPHALVHDGNRWHVRAYCHKRKAFRDFSLTR. Positions 208-299 are WCX domain; sequence GQDRDRADED…RDEIKDLIQY (92 aa).

Homodimer.

Its function is as follows. Transcriptional regulator of a CBASS antivirus system. CBASS (cyclic oligonucleotide-based antiphage signaling system) provides immunity against bacteriophage. The CD-NTase protein synthesizes cyclic nucleotides in response to infection; these serve as specific second messenger signals. The signals activate a diverse range of effectors, leading to bacterial cell death and thus abortive phage infection. A type III CBASS system, part of a Cap17-CapW-CdnC-Cap7-Cap6-Cap18 locus. Binds specifically to palindromes that overlap the -10 site in the promoter of cdnC, found between the genes for divergently transcribed capW and cdnC (cognate DNA). Probably represses transcription bidirectionally from the promoter. The protein is DNA-binding transcriptional repressor CapW of Pseudomonas aeruginosa.